The following is a 152-amino-acid chain: Cytochrome c-type biogenesis protein CcmE 2 (152 aa).

Residues 1-8 (MNPQRRRR) lie on the Cytoplasmic side of the membrane. A helical; Signal-anchor for type II membrane protein transmembrane segment spans residues 9–29 (LWLVLALVLAGGLATTLVAMA). Residues 30-152 (LQRNVAYLYT…HQVAPAKVTQ (123 aa)) are Periplasmic-facing. 2 residues coordinate heme: His-123 and Tyr-127.

It belongs to the CcmE/CycJ family.

The protein resides in the cell inner membrane. Heme chaperone required for the biogenesis of c-type cytochromes. Transiently binds heme delivered by CcmC and transfers the heme to apo-cytochromes in a process facilitated by CcmF and CcmH. The polypeptide is Cytochrome c-type biogenesis protein CcmE 2 (Xanthomonas campestris pv. campestris (strain 8004)).